The primary structure comprises 237 residues: Ras-related protein RABA3 (237 aa).

Position 35–42 (35–42) interacts with GTP; that stretch reads GDSAVGKT. The Effector region signature appears at 57–65; it reads SKSTIGVEF. GTP-binding positions include 83–87, 141–144, and 172–173; these read DTAGQ, NKAD, and SA. S-geranylgeranyl cysteine attachment occurs at residues Cys235 and Cys237. Residue Cys237 is modified to Cysteine methyl ester.

Belongs to the small GTPase superfamily. Rab family. As to expression, expressed in root tips.

Its subcellular location is the endosome membrane. The protein resides in the golgi apparatus. It localises to the trans-Golgi network membrane. In terms of biological role, intracellular vesicle trafficking and protein transport. The polypeptide is Ras-related protein RABA3 (RABA3) (Arabidopsis thaliana (Mouse-ear cress)).